We begin with the raw amino-acid sequence, 313 residues long: MAEISAKLVQELRQKTGAGMMDCKKALKETEGDVEQAIDWLRKKGIASAGKKSDRIAAEGLVDTYIQPGGKVGVLIEVNCQTDFVARNDAFKTLVKNLAQQAATADSVESLLAQPYIEDANLTVDEAIKQTIANLGENIQVRRFINFALTDKTGVVDSYIHTGGRVGVLVELNSQSEAGAANEEVQNLARNAAMQVAACPNVEYVSVDQIPAEVVQREKDVESGKEDIANKPENIREKIVQGRIEKRLKELTLVDQPYIRDQSISVEDLVKQVKAKAGEEVEVSRFVRYILGEGIEKQESNFAEEVAAQMGVK.

Residues Thr82–Val85 form an involved in Mg(2+) ion dislocation from EF-Tu region.

This sequence belongs to the EF-Ts family.

The protein localises to the cytoplasm. In terms of biological role, associates with the EF-Tu.GDP complex and induces the exchange of GDP to GTP. It remains bound to the aminoacyl-tRNA.EF-Tu.GTP complex up to the GTP hydrolysis stage on the ribosome. The chain is Elongation factor Ts from Nostoc sp. (strain PCC 7120 / SAG 25.82 / UTEX 2576).